Consider the following 428-residue polypeptide: MNIAVVGLSHKTAPVEIREKLSIPEAKIESALTHLKGYPHIQEVAIISTCNRLEIYAVVTDTEKGVVEITQFLAEIGHIPLNVLRRYLFTLLHQDAVRHLLRVSAGLESLVLGEGQILAQVKNTHKLAQKYNTISQLLDRLFKQAMTAGKRVRTETSIGTGAVSISSAAVELAHAKVTDLSSKKIAIIGAGKMSRLLVTHLLAKGSQQIAIINRSQRRAQELAREFPHLPLQLYGLEEMMTTVAASDIVFTSTGATEPILTKTLLTEVTITANSLMLIDISVPRNVHTDVKELAQVQAFNVDDLKAVVAANQESRRQMAREAEALLEQEVEAFELWWRSLDTVPTISCLRSKIEDIREQELEKALSRLGTEFAEKHQEVIEAMTRGIVNKILHEPMVQLRAQQDIEARKRCLQSLQMLFNLSVGEEYS.

Residues 49-52, Ser-109, 114-116, and Gln-120 contribute to the substrate site; these read TCNR and EGQ. The active-site Nucleophile is Cys-50. 189–194 is an NADP(+) binding site; it reads GAGKMS.

This sequence belongs to the glutamyl-tRNA reductase family. Homodimer.

The enzyme catalyses (S)-4-amino-5-oxopentanoate + tRNA(Glu) + NADP(+) = L-glutamyl-tRNA(Glu) + NADPH + H(+). It participates in porphyrin-containing compound metabolism; protoporphyrin-IX biosynthesis; 5-aminolevulinate from L-glutamyl-tRNA(Glu): step 1/2. Its pathway is porphyrin-containing compound metabolism; chlorophyll biosynthesis. Its function is as follows. Catalyzes the NADPH-dependent reduction of glutamyl-tRNA(Glu) to glutamate 1-semialdehyde (GSA). The chain is Glutamyl-tRNA reductase from Microcystis aeruginosa (strain NIES-843 / IAM M-2473).